A 122-amino-acid chain; its full sequence is Small ribosomal subunit protein uS13 (122 aa).

The disordered stretch occupies residues 95–122; that stretch reads GLPVHGQRTKTNARTRKGPARTVAGKKK.

Belongs to the universal ribosomal protein uS13 family. In terms of assembly, part of the 30S ribosomal subunit. Forms a loose heterodimer with protein S19. Forms two bridges to the 50S subunit in the 70S ribosome.

Functionally, located at the top of the head of the 30S subunit, it contacts several helices of the 16S rRNA. In the 70S ribosome it contacts the 23S rRNA (bridge B1a) and protein L5 of the 50S subunit (bridge B1b), connecting the 2 subunits; these bridges are implicated in subunit movement. Contacts the tRNAs in the A and P-sites. The chain is Small ribosomal subunit protein uS13 from Geotalea uraniireducens (strain Rf4) (Geobacter uraniireducens).